The chain runs to 24 residues: Calreticulin (24 aa).

Belongs to the calreticulin family. In terms of assembly, monomer. Component of an EIF2 complex at least composed of CELF1/CUGBP1, CALR, CALR3, EIF2S1, EIF2S2, HSP90B1 and HSPA5. Interacts with PDIA3/ERp57 and SPACA9. Interacts with TRIM21. Interacts with NR3C1. Interacts with PPIB. Interacts (via P-domain) with PDIA5. Interacts with CLCC1. Pancreas.

It localises to the endoplasmic reticulum lumen. It is found in the cytoplasm. The protein localises to the cytosol. Its subcellular location is the cytolytic granule. The protein resides in the secreted. It localises to the extracellular space. It is found in the extracellular matrix. The protein localises to the cell surface. Its subcellular location is the sarcoplasmic reticulum lumen. The protein resides in the cytoplasmic vesicle. It localises to the secretory vesicle. It is found in the cortical granule. Its function is as follows. Calcium-binding chaperone that promotes folding, oligomeric assembly and quality control in the endoplasmic reticulum (ER) via the calreticulin/calnexin cycle. This lectin interacts transiently with almost all of the monoglucosylated glycoproteins that are synthesized in the ER. Interacts with the DNA-binding domain of NR3C1 and mediates its nuclear export. Involved in maternal gene expression regulation. May participate in oocyte maturation via the regulation of calcium homeostasis. Present in the cortical granules of non-activated oocytes, is exocytosed during the cortical reaction in response to oocyte activation and might participate in the block to polyspermy. In Canis lupus familiaris (Dog), this protein is Calreticulin (CALR).